The following is a 422-amino-acid chain: Histidine--tRNA ligase (422 aa).

The protein belongs to the class-II aminoacyl-tRNA synthetase family. As to quaternary structure, homodimer.

It localises to the cytoplasm. The catalysed reaction is tRNA(His) + L-histidine + ATP = L-histidyl-tRNA(His) + AMP + diphosphate + H(+). This is Histidine--tRNA ligase from Vibrio parahaemolyticus serotype O3:K6 (strain RIMD 2210633).